The primary structure comprises 202 residues: 3-isopropylmalate dehydratase small subunit (202 aa).

It belongs to the LeuD family. LeuD type 1 subfamily. Heterodimer of LeuC and LeuD.

It catalyses the reaction (2R,3S)-3-isopropylmalate = (2S)-2-isopropylmalate. It participates in amino-acid biosynthesis; L-leucine biosynthesis; L-leucine from 3-methyl-2-oxobutanoate: step 2/4. Its function is as follows. Catalyzes the isomerization between 2-isopropylmalate and 3-isopropylmalate, via the formation of 2-isopropylmaleate. This Novosphingobium aromaticivorans (strain ATCC 700278 / DSM 12444 / CCUG 56034 / CIP 105152 / NBRC 16084 / F199) protein is 3-isopropylmalate dehydratase small subunit.